Here is a 396-residue protein sequence, read N- to C-terminus: Elongation factor Tu 2 (396 aa).

One can recognise a tr-type G domain in the interval Lys-10 to Thr-206. Residues Gly-19–Thr-26 form a G1 region. Residue Gly-19–Thr-26 coordinates GTP. Residue Thr-26 participates in Mg(2+) binding. Residues Gly-60–Ser-64 are G2. Residues Asp-81–Gly-84 are G3. GTP is bound by residues Asp-81–His-85 and Asn-136–Asp-139. The tract at residues Asn-136 to Asp-139 is G4. Positions Ser-174–Arg-176 are G5.

The protein belongs to the TRAFAC class translation factor GTPase superfamily. Classic translation factor GTPase family. EF-Tu/EF-1A subfamily. Monomer.

The protein resides in the cytoplasm. The enzyme catalyses GTP + H2O = GDP + phosphate + H(+). GTP hydrolase that promotes the GTP-dependent binding of aminoacyl-tRNA to the A-site of ribosomes during protein biosynthesis. The chain is Elongation factor Tu 2 from Xanthomonas campestris pv. campestris (strain 8004).